Consider the following 358-residue polypeptide: DnaJ homolog subfamily C member 18 (358 aa).

The 65-residue stretch at 82-146 folds into the J domain; the sequence is NYYEILGVSR…DKRLRYDEYG (65 aa). A helical transmembrane segment spans residues 228-248; the sequence is AFIQLLPVLVIVIISVITQLL.

It is found in the endoplasmic reticulum membrane. In terms of biological role, (Microbial infection) In case of infection by polyomavirus, involved in the virus endoplasmic reticulum membrane penetration and infection. Regulates the recruitment of DNAJB12:DNAJB14 into SV40-induced foci and all cooperate to guide SV40 across the endoplasmic reticulum membrane. The foci represent the site from which SV40 penetrates into the cytosol. This is DnaJ homolog subfamily C member 18 from Homo sapiens (Human).